A 479-amino-acid chain; its full sequence is PRAME family member 19 (479 aa).

One copy of the LRR 1 repeat lies at 15–38; sequence QSLLRDQALAISVLDELPRELFPR. One copy of the LRR 1; degenerate repeat lies at 97 to 124; that stretch reads RWKLQVLEMRDVDENFWTIWSGARPLSC. The stretch at 179–203 is one LRR 2; degenerate repeat; sequence HLCCTKVVNYSMNILNFRNILETVY. Residues 204–230 form an LRR 3; degenerate repeat; it reads PDSIQVLEIWNMCWPCMVAEVSRYLSQ. The LRR 4; degenerate repeat unit spans residues 231–265; the sequence is MKNLRKLFISDGCGYLPSFESQGQLVAEFSSVFLR. 5 LRR repeats span residues 266-291, 292-323, 324-342, 348-375, and 376-400; these read LEYL…IRCL, KSPL…SQLK, QLNL…PLRA, AATL…ALSR, and CSNL…LLRH.

The protein belongs to the PRAME family.

In Homo sapiens (Human), this protein is PRAME family member 19.